We begin with the raw amino-acid sequence, 151 residues long: Transcriptional repressor NrdR (151 aa).

A zinc finger spans residues 3–34 (CPYCGYGESKVVDSRATDDKMAIRRRRECLKC). The 91-residue stretch at 49–139 (LLVIKKNMSR…VYRQFKDINT (91 aa)) folds into the ATP-cone domain.

This sequence belongs to the NrdR family. Requires Zn(2+) as cofactor.

Negatively regulates transcription of bacterial ribonucleotide reductase nrd genes and operons by binding to NrdR-boxes. The polypeptide is Transcriptional repressor NrdR (Clostridium kluyveri (strain NBRC 12016)).